The chain runs to 157 residues: Ribosomal RNA large subunit methyltransferase H (157 aa).

S-adenosyl-L-methionine-binding positions include L73, G105, and 124-129 (LSRMTF).

The protein belongs to the RNA methyltransferase RlmH family. Homodimer.

The protein resides in the cytoplasm. It catalyses the reaction pseudouridine(1915) in 23S rRNA + S-adenosyl-L-methionine = N(3)-methylpseudouridine(1915) in 23S rRNA + S-adenosyl-L-homocysteine + H(+). In terms of biological role, specifically methylates the pseudouridine at position 1915 (m3Psi1915) in 23S rRNA. This chain is Ribosomal RNA large subunit methyltransferase H, found in Porphyromonas gingivalis (strain ATCC 33277 / DSM 20709 / CIP 103683 / JCM 12257 / NCTC 11834 / 2561).